The following is a 448-amino-acid chain: Tubulin beta chain (448 aa).

Positions 11, 69, 138, 142, 143, 144, 204, and 226 each coordinate GTP. E69 serves as a coordination point for Mg(2+). Residues 429 to 448 form a disordered region; the sequence is SISDGEEQPYAEEAAYEAEE. Acidic residues predominate over residues 432 to 448; that stretch reads DGEEQPYAEEAAYEAEE.

This sequence belongs to the tubulin family. Dimer of alpha and beta chains. A typical microtubule is a hollow water-filled tube with an outer diameter of 25 nm and an inner diameter of 15 nM. Alpha-beta heterodimers associate head-to-tail to form protofilaments running lengthwise along the microtubule wall with the beta-tubulin subunit facing the microtubule plus end conferring a structural polarity. Microtubules usually have 13 protofilaments but different protofilament numbers can be found in some organisms and specialized cells. The cofactor is Mg(2+).

The protein resides in the cytoplasm. The protein localises to the cytoskeleton. In terms of biological role, tubulin is the major constituent of microtubules, a cylinder consisting of laterally associated linear protofilaments composed of alpha- and beta-tubulin heterodimers. Microtubules grow by the addition of GTP-tubulin dimers to the microtubule end, where a stabilizing cap forms. Below the cap, tubulin dimers are in GDP-bound state, owing to GTPase activity of alpha-tubulin. The polypeptide is Tubulin beta chain (Aspergillus fumigatus (strain ATCC MYA-4609 / CBS 101355 / FGSC A1100 / Af293) (Neosartorya fumigata)).